A 5537-amino-acid chain; its full sequence is Histone-lysine N-methyltransferase 2D (5537 aa).

The tract at residues 1–60 (MDSQKLAGEDKDSEPAADGPAASEDPSATESDLPNPHVGEVSVLSSGSPRLQETPQDCSG) is disordered. Residue S27 is modified to Phosphoserine. Residues 43 to 57 (VLSSGSPRLQETPQD) show a composition bias toward polar residues. A C2HC pre-PHD-type 1; degenerate zinc finger spans residues 104–149 (GPNEAVLPSEDLSQIGFPEGLTPAHLGEPGGSCWAHHWCAAWSAGV). 3 PHD-type zinc fingers span residues 170-218 (QRCS…PEHS), 226-276 (EARC…CKVC), and 273-323 (CKVC…CRVC). The segment at 229-274 (CAVCEGPGELCDLFFCTSCGHHYHGACLDTALTARKRAGWQCPECK) adopts an RING-type 1; atypical zinc-finger fold. The segment at 276–321 (CQACRKPGNDSKMLVCETCDKGYHTFCLKPPMEELPAHSWKCKACR) adopts an RING-type 2; degenerate zinc-finger fold. Disordered regions lie at residues 368-387 (VCSRFSPPEPGDTPTDEPDA), 393-416 (QGQPKGGHVTSMQPKEPGPLQCEA), 436-1331 (EEMP…RLKS), and 1340-1359 (VVADIDSSPSKEEEEEDDDT). Residues 439–668 (PLLPPPEESP…VSRLSPPPEE (230 aa)) form a 15 X 5 AA repeats of S/P-P-P-E/P-E/A region. Residues 440-473 (LLPPPEESPLSPPPEESPTSPPPEASRLSPPPEE) are compositionally biased toward pro residues. Repeat copies occupy residues 442–446 (PPPEE), 460–464 (PPPEA), and 469–473 (PPPEE). Over residues 474 to 483 (LPASPLPEAL) the composition is skewed to low complexity. Over residues 494–509 (LSPPPEESPLSPPPES) the composition is skewed to pro residues. 2 tandem repeats follow at residues 496 to 500 (PPPEE) and 504 to 508 (SPPPE). The span at 510–519 (SPFSPLEESP) shows a compositional bias: low complexity. 2 stretches are compositionally biased toward pro residues: residues 520-547 (LSPPEESPPSPALETPLSPPPEASPLSP) and 554-595 (LSPP…PPPE). Tandem repeats lie at residues 521-525 (SPPEE), 555-559 (SPPPE), 564-568 (SPPPE), 573-577 (SPPPE), and 582-586 (SPPPE). Low complexity predominate over residues 596 to 607 (ASRLFPPFEESP). The segment covering 608–649 (LSPPPEESPLSPPPEASRLSPPPEDSPMSPPPEESPMSPPPE) has biased composition (pro residues). 4 tandem repeats follow at residues 609–613 (SPPPE), 618–622 (SPPPE), 627–631 (SPPPE), and 645–649 (SPPPE). Positions 650-662 (VSRLSPLPVVSRL) are enriched in low complexity. Repeat unit 15 spans residues 663–667 (SPPPE). Positions 663 to 712 (SPPPEESPLSPPPEESPTSPPPEASRLSPPPEDSPTSPPPEDSPASPPPE) are enriched in pro residues. The span at 713–725 (DSLMSLPLEESPL) shows a compositional bias: low complexity. At S744 the chain carries Phosphoserine. Basic and acidic residues-rich tracts occupy residues 745–760 (PRPEEPHLSPRPEEPH) and 845–869 (RPEESHLSPELEKPPLSPRPEKPPE). 2 stretches are compositionally biased toward low complexity: residues 889–903 (PSLSPLLGEPALSEP) and 911–928 (LPEELPLSPSGEPSLSPQ). The span at 929 to 940 (LMPPDPLPPPLS) shows a compositional bias: pro residues. A compositionally biased stretch (low complexity) spans 941–954 (PIITAAAPPALSPL). A compositionally biased stretch (pro residues) spans 994–1008 (EPVPPMILPPSPGSP). A compositionally biased stretch (low complexity) spans 1048–1057 (PLSVPSPLSP). Residues 1068-1080 (AELHEMETEKVSE) show a composition bias toward basic and acidic residues. S1151 carries the phosphoserine modification. T1195 carries the post-translational modification Phosphothreonine. Residues 1207-1216 (EISNLSQGDA) show a composition bias toward polar residues. At S1249 the chain carries Phosphoserine. The residue at position 1267 (T1267) is a Phosphothreonine. S1270 is modified (phosphoserine). Composition is skewed to basic residues over residues 1289-1302 (GRRRSSPARSRIKQ) and 1310-1329 (GRRRPRGGAHGGRGRGRARL). 3 PHD-type zinc fingers span residues 1377–1430 (QDMC…CIVC), 1427–1477 (CIVC…CVSC), and 1504–1559 (LVTC…CQPY). The RING-type 3; atypical zinc finger occupies 1507 to 1557 (CPICHAPYVEEDLLIQCRHCERWMHAGCESLFTEDDVEQAADEGFDCVSCQ). Residue S1606 is modified to Phosphoserine. Disordered stretches follow at residues 1610–1767 (KRRQ…LEDM), 1793–1889 (GVGR…MESK), 1904–2002 (EQHL…NQRS), and 2165–2683 (PQVP…QRQR). The segment covering 1637–1666 (PDDKKDGDLDTDELLKGEGGVEHMECEIKL) has biased composition (basic and acidic residues). S1671 carries the post-translational modification Phosphoserine. The segment covering 1675-1685 (EPGKEETEESK) has biased composition (basic and acidic residues). 2 stretches are compositionally biased toward basic residues: residues 1702-1712 (RQRKSHTRTKK) and 1753-1762 (KQQRRGRKKS). Composition is skewed to basic and acidic residues over residues 1806–1825 (AKGDGGSERKELPTSQKGDD) and 1832–1841 (EESRGLEGKA). S1820 and S1834 each carry phosphoserine. A phosphothreonine mark is found at T1843 and T1865. Residues 1874–1889 (DLDRISTEELPKMESK) are compositionally biased toward basic and acidic residues. Residues 1979 to 1990 (TTPSTPTTPTTE) show a composition bias toward low complexity. The span at 2190–2209 (PTAPPTYPPYPSPTGAPAQP) shows a compositional bias: pro residues. Position 2239 is a phosphoserine (S2239). T2240 carries the phosphothreonine modification. Position 2246 is an N6-acetyllysine (K2246). Phosphoserine is present on residues S2260 and S2274. Over residues 2280-2292 (ESRKALEVKKEEL) the composition is skewed to basic and acidic residues. Phosphoserine is present on residues S2309, S2311, and S2342. Composition is skewed to pro residues over residues 2350–2365 (QEPPPAQALAPSPPSH) and 2379–2393 (AQPPLTPRPQPPPPE). 2 stretches are compositionally biased toward low complexity: residues 2409-2431 (SRVPASPQSQSSSQSPLTPRPLS) and 2494-2505 (FPAALPAGPAGE). The residue at position 2535 (R2535) is an Asymmetric dimethylarginine. Positions 2547-2560 (LKPPVPQPGLPPPH) are enriched in pro residues. Over residues 2574–2584 (KPQSTNYTVAT) the composition is skewed to polar residues. Over residues 2589 to 2609 (PSGSPLGPSSGSTGESYGLSP) the composition is skewed to low complexity. Pro residues predominate over residues 2610–2621 (LRPPSVLPPPAP). S2640 is subject to Phosphoserine. Residues 2669-2707 (MSGLSQTELEKQRQRQRLRELLIRQQIQRNTLRQEKETA) are a coiled coil. An LXXLL motif 1 motif is present at residues 2686–2690 (LRELL). Disordered regions lie at residues 2697–2814 (RNTL…QQQQ) and 2835–2996 (ARFP…LDDD). The segment covering 2707–2722 (AAAAAGAVGPPGSWGA) has biased composition (low complexity). Composition is skewed to polar residues over residues 2733–2746 (SRGQTPFAGTQDKS) and 2781–2790 (PSSMDVNSRQ). At R2836 the chain carries Asymmetric dimethylarginine. A compositionally biased stretch (pro residues) spans 2931–2940 (PQKPSAPPAP). The short motif at 3038-3042 (LDDLL) is the LXXLL motif 2 element. Positions 3078 to 3110 (EKAEREALLRGVEPGPLGPEERPPPAADASEPR) are disordered. K3079 is modified (N6-acetyllysine). S3130 carries the post-translational modification Phosphoserine. Disordered stretches follow at residues 3147-3209 (ANSL…GSSL) and 3263-3339 (KQQL…AHAL). T3197 is subject to Phosphothreonine. Low complexity-rich tracts occupy residues 3198–3209 (PSPLSGPGGSSL), 3263–3289 (KQQLSAQLQPAQQQQQQQQQHSLLSAP), and 3301–3320 (GSSPSLAGSQQQLSLGLAGA). S3199 carries the phosphoserine modification. Residues 3249–3282 (IEDLLEHEKKELQKKQQLSAQLQPAQQQQQQQQQ) are a coiled coil. Residues 3325-3334 (LPQPLMPTQP) are compositionally biased toward pro residues. At K3433 the chain carries N6-acetyllysine. Disordered regions lie at residues 3462–3499 (LSGGPSSDLQNHVAAGSGQERSAGDPSQPRPNPPTFAQ) and 3596–3673 (RNKQ…GPFL). The stretch at 3562–3614 (EKLKLVTEQQSKIQKQLDQVRKQQKEHTNLMAEYRNKQQQQQQQQQQQQQQHS) forms a coiled coil. Composition is skewed to low complexity over residues 3599–3612 (QQQQQQQQQQQQQQ) and 3631–3643 (LPGQLLPGHGLQP). Residues 3714-3750 (RLLQERQLQLQQQRMQLAQKLQQQQQQQQQQQHLLGQ) adopt a coiled-coil conformation. Position 3727 is an asymmetric dimethylarginine (R3727). The interval 3758-3802 (QQGPGVQTNQALGPKPQGLMPPSSHQGLLVQQLSPQPPQGPQGML) is disordered. Residues 3897-3975 (LQQLQQQQQL…FQQQQQQQQM (79 aa)) adopt a coiled-coil conformation. Residues 3984 to 4191 (LLSPQQQQQQ…GQGLPGVGIM (208 aa)) form a disordered region. Residues 4012 to 4023 (PGALGPTLLLTG) show a composition bias toward low complexity. A compositionally biased stretch (polar residues) spans 4024–4045 (KEQNTVDPAVSSEATEGPSTHQ). Residues 4073-4108 (SQLLLVQPQPQPQPSSLQLQPPLRLPGQQQQQVSLL) show a composition bias toward low complexity. Residues 4111-4120 (AGGGSHGQLG) are compositionally biased toward gly residues. Positions 4137–4154 (PSVSLGDQPGSMTQNLLG) are enriched in polar residues. R4198 is modified (asymmetric dimethylarginine). S4215 is subject to Phosphoserine. Residues 4222-4226 (LQALL) carry the LXXLL motif 3 motif. Disordered regions lie at residues 4233-4398 (QSQA…VPGH) and 4410-4452 (ASQL…LLLA). Residues 4237 to 4251 (VRQTPPYQEPGTQTS) are compositionally biased toward polar residues. The segment covering 4252–4282 (PLQGLLGCQPQLGGFPGPQTGPLQELGAGPR) has biased composition (low complexity). The short motif at 4253-4257 (LQGLL) is the LXXLL motif 4 element. Residues 4283–4293 (PQGPPRLPAPP) show a composition bias toward pro residues. 2 stretches are compositionally biased toward low complexity: residues 4294-4305 (GALSTGPVLGPV) and 4320-4331 (PSQLPSPSSQLP). Over residues 4338–4357 (PTHPGTPKPQGPTLEPPPGR) the composition is skewed to pro residues. At S4359 the chain carries Phosphoserine. An LXXLL motif 5 motif is present at residues 4463–4467 (LQKLL). K4465 bears the N6-acetyllysine mark. Disordered regions lie at residues 4503–4544 (QGTP…KEDG) and 4613–4727 (KNNL…HLGS). Pro residues predominate over residues 4619–4633 (PPTPPSSLPPTPPPS). The segment covering 4648–4673 (LGEHPKDAASARDSERALRDTSEVKS) has biased composition (basic and acidic residues). Residue S4738 is modified to Phosphoserine. K4756 is covalently cross-linked (Glycyl lysine isopeptide (Lys-Gly) (interchain with G-Cter in SUMO2)). Position 4776 is an N6-acetyllysine (K4776). Phosphoserine occurs at positions 4822 and 4849. The disordered stretch occupies residues 4822 to 4857 (SPARAGTEPKKGEAEGPGGKEKGLEGKSPDTGPDWL). The segment covering 4828–4849 (TEPKKGEAEGPGGKEKGLEGKS) has biased composition (basic and acidic residues). A Glycyl lysine isopeptide (Lys-Gly) (interchain with G-Cter in SUMO2) cross-link involves residue K4880. Positions 4905–4980 (QLSAPPPEEP…GEDSRPPRLK (76 aa)) are disordered. Residues 4908 to 4931 (APPPEEPSPPPSPLAPSPASPPTE) are compositionally biased toward pro residues. A compositionally biased stretch (low complexity) spans 4932 to 4941 (PLVELPTEPL). Over residues 4966–4976 (RPPEEGEDSRP) the composition is skewed to basic and acidic residues. The short motif at 4990–4994 (LRLLL) is the LXXLL motif 6 element. A C2HC pre-PHD-type 2 zinc finger spans residues 5029-5069 (MRRCCFCHEEGDGATDGPARLLNLDLDLWVHLNCALWSTEV). The PHD-type 7 zinc-finger motif lies at 5090–5137 (TKCSLCQRTGATSSCNRMRCPNVYHFACAIRAKCMFFKDKTMLCPMHK). The 61-residue stretch at 5175-5235 (LHMFRVGGLV…CCYRCSIGEN (61 aa)) folds into the FYR N-terminal domain. The region spanning 5236-5321 (NGRPEFVIKV…ESCQNYLFRY (86 aa)) is the FYR C-terminal domain. The short motif at 5337-5342 (GCARSE) is the WDR5 interaction motif (WIN) element. The SET domain maps to 5397 to 5513 (NNVYLARSRI…KGEELTYDYQ (117 aa)). Residues Y5451 and 5474 to 5475 (NH) each bind S-adenosyl-L-methionine. C5477, C5525, C5527, and C5532 together coordinate Zn(2+). In terms of domain architecture, Post-SET spans 5521 to 5537 (HKIPCHCGAWNCRKWMN).

The protein belongs to the class V-like SAM-binding methyltransferase superfamily. Histone-lysine methyltransferase family. TRX/MLL subfamily. In terms of assembly, component of the MLL2 complex (also named ASCOM complex), at least composed of catalytic subunit KMT2D/MLL2, ASH2L, RBBP5, WDR5, NCOA6, DPY30, KDM6A, PAXIP1/PTIP, PAGR1 and alpha- and beta-tubulin. Forms a core complex with the evolutionary conserved subcomplex WRAD composed of WDR5, RBBP5, ASH2L/ASH2 and DPY30 subunits; WRAD differentially stimulates the methyltransferase activity. Interacts with ESR1; interaction is direct. Interacts (via WIN motif) with WDR5. As to expression, expressed in most adult tissues, including a variety of hematoipoietic cells, with the exception of the liver.

The protein localises to the nucleus. The enzyme catalyses L-lysyl(4)-[histone H3] + S-adenosyl-L-methionine = N(6)-methyl-L-lysyl(4)-[histone H3] + S-adenosyl-L-homocysteine + H(+). Histone methyltransferase that catalyzes methyl group transfer from S-adenosyl-L-methionine to the epsilon-amino group of 'Lys-4' of histone H3 (H3K4). Part of chromatin remodeling machinery predominantly forms H3K4me1 methylation marks at active chromatin sites where transcription and DNA repair take place. Acts as a coactivator for estrogen receptor by being recruited by ESR1, thereby activating transcription. The protein is Histone-lysine N-methyltransferase 2D (KMT2D) of Homo sapiens (Human).